The chain runs to 363 residues: Cyanide hydratase (363 aa).

The region spanning 6–285 (YKAACVTSEP…DGLLFVDIDL (280 aa)) is the CN hydrolase domain. The Proton acceptor role is filled by E46. K128 is a catalytic residue. The Nucleophile role is filled by C163.

This sequence belongs to the carbon-nitrogen hydrolase superfamily. Nitrilase family. As to quaternary structure, oligomer of dimers, forming left-handed helical fibers.

The catalysed reaction is formamide = hydrogen cyanide + H2O. Functionally, catalyzes the hydration of cyanide to formamide. Degradation of cyanide may be important for plant pathogenic fungi in infection of cyanogenic plants. In Alternaria brassicicola (Dark leaf spot agent), this protein is Cyanide hydratase (CyhAB).